The sequence spans 296 residues: Putative fatty acid elongase DDB_G0272012 (296 aa).

7 helical membrane-spanning segments follow: residues 51-71 (FQIL…IKFL), 83-103 (VSIL…VGIL), 134-154 (WSYI…IIVL), 159-179 (LIFL…YFMY), 184-204 (LQLW…YFYF), 220-240 (MIQI…SAAI), and 253-273 (AFIS…QFFV). Positions 277 to 290 (SNKPTSSSSTTTPT) are enriched in low complexity. A disordered region spans residues 277 to 296 (SNKPTSSSSTTTPTKTKKID).

Belongs to the ELO family.

The protein resides in the membrane. It carries out the reaction a very-long-chain acyl-CoA + malonyl-CoA + H(+) = a very-long-chain 3-oxoacyl-CoA + CO2 + CoA. In terms of biological role, could be implicated in synthesis of very long chain fatty acids. The polypeptide is Putative fatty acid elongase DDB_G0272012 (Dictyostelium discoideum (Social amoeba)).